Consider the following 1408-residue polypeptide: DNA-directed RNA polymerase subunit beta' (1408 aa).

Cysteine 70, cysteine 72, cysteine 85, and cysteine 88 together coordinate Zn(2+). Mg(2+) is bound by residues aspartate 460, aspartate 462, and aspartate 464. Zn(2+) contacts are provided by cysteine 814, cysteine 888, cysteine 895, and cysteine 898.

It belongs to the RNA polymerase beta' chain family. As to quaternary structure, the RNAP catalytic core consists of 2 alpha, 1 beta, 1 beta' and 1 omega subunit. When a sigma factor is associated with the core the holoenzyme is formed, which can initiate transcription. Mg(2+) is required as a cofactor. It depends on Zn(2+) as a cofactor.

The catalysed reaction is RNA(n) + a ribonucleoside 5'-triphosphate = RNA(n+1) + diphosphate. DNA-dependent RNA polymerase catalyzes the transcription of DNA into RNA using the four ribonucleoside triphosphates as substrates. The sequence is that of DNA-directed RNA polymerase subunit beta' from Serratia proteamaculans (strain 568).